The sequence spans 484 residues: Protein nucleotidyltransferase YdiU (484 aa).

Gly87, Gly89, Arg90, Lys110, Asp122, Gly123, Arg173, and Arg180 together coordinate ATP. Asp249 serves as the catalytic Proton acceptor. Mg(2+) is bound by residues Asn250 and Asp259. Residue Asp259 coordinates ATP.

It belongs to the SELO family. Requires Mg(2+) as cofactor. Mn(2+) is required as a cofactor.

The catalysed reaction is L-seryl-[protein] + ATP = 3-O-(5'-adenylyl)-L-seryl-[protein] + diphosphate. The enzyme catalyses L-threonyl-[protein] + ATP = 3-O-(5'-adenylyl)-L-threonyl-[protein] + diphosphate. It carries out the reaction L-tyrosyl-[protein] + ATP = O-(5'-adenylyl)-L-tyrosyl-[protein] + diphosphate. It catalyses the reaction L-histidyl-[protein] + UTP = N(tele)-(5'-uridylyl)-L-histidyl-[protein] + diphosphate. The catalysed reaction is L-seryl-[protein] + UTP = O-(5'-uridylyl)-L-seryl-[protein] + diphosphate. The enzyme catalyses L-tyrosyl-[protein] + UTP = O-(5'-uridylyl)-L-tyrosyl-[protein] + diphosphate. Its function is as follows. Nucleotidyltransferase involved in the post-translational modification of proteins. It can catalyze the addition of adenosine monophosphate (AMP) or uridine monophosphate (UMP) to a protein, resulting in modifications known as AMPylation and UMPylation. This is Protein nucleotidyltransferase YdiU from Lachnoclostridium phytofermentans (strain ATCC 700394 / DSM 18823 / ISDg) (Clostridium phytofermentans).